The following is a 123-amino-acid chain: Small ribosomal subunit protein uS12 (123 aa).

The residue at position 89 (aspartate 89) is a 3-methylthioaspartic acid. Residues serine 101 to lysine 123 form a disordered region. Positions glycine 113–lysine 123 are enriched in basic residues.

It belongs to the universal ribosomal protein uS12 family. In terms of assembly, part of the 30S ribosomal subunit. Contacts proteins S8 and S17. May interact with IF1 in the 30S initiation complex.

With S4 and S5 plays an important role in translational accuracy. Its function is as follows. Interacts with and stabilizes bases of the 16S rRNA that are involved in tRNA selection in the A site and with the mRNA backbone. Located at the interface of the 30S and 50S subunits, it traverses the body of the 30S subunit contacting proteins on the other side and probably holding the rRNA structure together. The combined cluster of proteins S8, S12 and S17 appears to hold together the shoulder and platform of the 30S subunit. The chain is Small ribosomal subunit protein uS12 from Stutzerimonas stutzeri (strain A1501) (Pseudomonas stutzeri).